Reading from the N-terminus, the 403-residue chain is Dynactin subunit 2-B (403 aa).

Residues Met1 to Pro26 are disordered. Residues Pro99–Lys132 are a coiled coil. A disordered region spans residues Ala183–Leu206. Residues Ala184 to Ser194 show a composition bias toward basic and acidic residues. Residues Lys381–Leu401 adopt a coiled-coil conformation.

The protein belongs to the dynactin subunit 2 family. Subunit of dynactin, a multiprotein complex part of a tripartite complex with dynein and a adapter, such as BICDL1, BICD2 or HOOK3. The dynactin complex is built around ACTR1A/ACTB filament and consists of an actin-related filament composed of a shoulder domain, a pointed end and a barbed end. Its length is defined by its flexible shoulder domain. The soulder is composed of 2 DCTN1 subunits, 4 DCTN2 and 2 DCTN3.

It localises to the cytoplasm. It is found in the cytoskeleton. The protein localises to the microtubule organizing center. The protein resides in the centrosome. Its subcellular location is the membrane. Functionally, part of the dynactin complex that activates the molecular motor dynein for ultra-processive transport along microtubules. In the dynactin soulder domain, binds the ACTR1A filament and acts as a molecular ruler to determine the length. Modulates cytoplasmic dynein binding to an organelle, and plays a role in prometaphase chromosome alignment and spindle organization during mitosis. Involved in anchoring microtubules to centrosomes. This Xenopus laevis (African clawed frog) protein is Dynactin subunit 2-B (dctn2-b).